We begin with the raw amino-acid sequence, 115 residues long: Small ribosomal subunit protein uS17 (115 aa).

Belongs to the universal ribosomal protein uS17 family. Part of the 30S ribosomal subunit.

In terms of biological role, one of the primary rRNA binding proteins, it binds specifically to the 5'-end of 16S ribosomal RNA. The chain is Small ribosomal subunit protein uS17 from Granulibacter bethesdensis (strain ATCC BAA-1260 / CGDNIH1).